Consider the following 801-residue polypeptide: Phosphatidylinositol 4-phosphate 5-kinase 1 (801 aa).

The first 21 residues, 1-21, serve as a signal peptide directing secretion; the sequence is MPGLHVVSFLVVLLLQLRSSG. MORN repeat units lie at residues 41–63, 64–86, 87–109, 110–132, 133–155, 156–178, 182–201, and 202–223; these read YVGS…DGAL, YDGE…SGAS, YEGD…DGSV, YKGS…NSDT, YEGF…DGNV, YIGR…NGDT, NWLN…SGAC, and YIGT…PGSK. Positions 366 to 797 constitute a PIPK domain; that stretch reads GHRSYYLMLN…RFISFLEKVF (432 aa).

Expressed in young seedlings, shoot and seeds, and at lower level in roots, stem and leaf.

It catalyses the reaction a 1,2-diacyl-sn-glycero-3-phospho-(1D-myo-inositol 4-phosphate) + ATP = a 1,2-diacyl-sn-glycero-3-phospho-(1D-myo-inositol-4,5-bisphosphate) + ADP + H(+). Involved in flowering. May suppress floral initiation by modifying the expression of genes related to floral induction. This chain is Phosphatidylinositol 4-phosphate 5-kinase 1 (PIPK1), found in Oryza sativa subsp. japonica (Rice).